The chain runs to 1115 residues: Iron-regulated protein FrpA (1115 aa).

Hemolysin-type calcium-binding repeat units lie at residues 755-772 (FGHN…NDTL), 773-790 (IGGA…SDTY), 901-918 (NGGL…NDLL), 919-936 (NGDA…NDTL), 937-954 (DGGE…NDAL), 955-972 (NGGE…NDTL), and 973-990 (IGGA…SDTY).

It belongs to the RTX prokaryotic toxin (TC 1.C.11) family.

It localises to the cell outer membrane. It is found in the secreted. Functionally, may participate in the pathogenesis of meningococcal disease. The sequence is that of Iron-regulated protein FrpA (frpA) from Neisseria meningitidis serogroup C.